A 123-amino-acid chain; its full sequence is Urotensin-2 (123 aa).

The N-terminal stretch at 1-20 (MDRVPFCCLLFVGLLNPLLS) is a signal peptide. Positions 21–104 (FPVTDTGEMS…TVLSRLLART (84 aa)) are excised as a propeptide. The disordered stretch occupies residues 63 to 91 (EAEGSLGQADPSAETPTPRGSLRKALTGQ). Cysteines 117 and 122 form a disulfide.

Belongs to the urotensin-2 family. Brain specific.

The protein resides in the secreted. Functionally, highly potent vasoconstrictor. The protein is Urotensin-2 (Uts2) of Rattus norvegicus (Rat).